We begin with the raw amino-acid sequence, 542 residues long: Probable serine/threonine-protein kinase ndrB (542 aa).

A disordered region spans residues 1 to 52; that stretch reads MNVERKLESLSLQQQQQEEQQDESEQPNQGVEDEEEEEYDEEEYEEEEEDIN. Low complexity predominate over residues 9–18; it reads SLSLQQQQQE. A compositionally biased stretch (acidic residues) spans 19-51; it reads EQQDESEQPNQGVEDEEEEEYDEEEYEEEEEDI. Residues 130–437 form the Protein kinase domain; sequence FESIRIIGRG…VEEIQSHPFF (308 aa). Residues 136–144 and Lys159 contribute to the ATP site; that span reads IGRGAFGEV. The active-site Proton acceptor is the Asp258. Residues 438 to 510 enclose the AGC-kinase C-terminal domain; that stretch reads KGVDWRRLRE…RNFDAMRDAF (73 aa). A disordered region spans residues 452-486; that stretch reads IIPQLSSPTDTSNFDHYEEEQQPEPMQPVQSKSRR. Over residues 455–465 the composition is skewed to polar residues; that stretch reads QLSSPTDTSNF.

Belongs to the protein kinase superfamily. AGC Ser/Thr protein kinase family.

It is found in the cytoplasm. The catalysed reaction is L-seryl-[protein] + ATP = O-phospho-L-seryl-[protein] + ADP + H(+). It carries out the reaction L-threonyl-[protein] + ATP = O-phospho-L-threonyl-[protein] + ADP + H(+). This Dictyostelium discoideum (Social amoeba) protein is Probable serine/threonine-protein kinase ndrB (ndrB).